The primary structure comprises 1165 residues: Disease resistance protein RPS4B (1165 aa).

The TIR domain occupies 12-174 (PQHQVFINFR…EIVKEVKKVL (163 aa)). Glu86 is an active-site residue. In terms of domain architecture, NB-ARC spans 211 to 474 (KQRLKELEEK…FLDIACFRSQ (264 aa)). An LRR 1 repeat occupies 592-613 (SHCPHECLTNNKINMPDGLELP). The stretch at 614–635 (LKEVRCLHWLKFPLEELPNDFD) is one LRR 2; degenerate repeat. 6 LRR repeats span residues 636-659 (PINL…VKDT), 684-703 (NLQR…RDVN), 704-725 (LTSL…PLIP), 726-748 (ENLK…VGNL), 772-794 (LKTL…EINK), and 795-818 (SSLK…SVQY). An LRR 9; degenerate repeat occupies 819 to 836 (LCLSRNDHLIYLPAGINQ). The stretch at 837-863 (VSQLTRLDLKYCTKLTYVPELPPTLQY) is one LRR 10 repeat.

This sequence belongs to the disease resistance TIR-NB-LRR family. As to quaternary structure, interacts with RRS1B. RPS4B-RRS1B heterodimer interacts with the bacterial effectors AvrRps4 and PopP2.

It is found in the nucleus. The enzyme catalyses NAD(+) + H2O = ADP-D-ribose + nicotinamide + H(+). Disease resistance (R) protein that specifically recognizes the AvrRps4 type III effector avirulence protein from P.syringae. Heterodimerization with RRS1B is required to form a functional complex to recognize AvrRps4 and to mediate the hypersensitive response. The chain is Disease resistance protein RPS4B from Arabidopsis thaliana (Mouse-ear cress).